Consider the following 223-residue polypeptide: Deoxyribose-phosphate aldolase (223 aa).

D92 functions as the Proton donor/acceptor in the catalytic mechanism. The Schiff-base intermediate with acetaldehyde role is filled by K158. K188 serves as the catalytic Proton donor/acceptor.

It belongs to the DeoC/FbaB aldolase family. DeoC type 1 subfamily.

Its subcellular location is the cytoplasm. The enzyme catalyses 2-deoxy-D-ribose 5-phosphate = D-glyceraldehyde 3-phosphate + acetaldehyde. It participates in carbohydrate degradation; 2-deoxy-D-ribose 1-phosphate degradation; D-glyceraldehyde 3-phosphate and acetaldehyde from 2-deoxy-alpha-D-ribose 1-phosphate: step 2/2. Catalyzes a reversible aldol reaction between acetaldehyde and D-glyceraldehyde 3-phosphate to generate 2-deoxy-D-ribose 5-phosphate. The sequence is that of Deoxyribose-phosphate aldolase from Mycolicibacterium paratuberculosis (strain ATCC BAA-968 / K-10) (Mycobacterium paratuberculosis).